The following is an 827-amino-acid chain: Beta-galactosidase 2 (827 aa).

A signal peptide spans 1–24; it reads MAASAVAVAFVVAVAAVLAAAASA. Glu182 functions as the Proton donor in the catalytic mechanism. Asn209 is a glycosylation site (N-linked (GlcNAc...) asparagine). Glu251 serves as the catalytic Nucleophile. The N-linked (GlcNAc...) asparagine glycan is linked to Asn458. Residues 741-827 enclose the SUEL-type lectin domain; it reads DYEKAKVHLQ…KRAVVEAICG (87 aa).

The protein belongs to the glycosyl hydrolase 35 family.

It localises to the secreted. Its subcellular location is the extracellular space. The protein localises to the apoplast. The catalysed reaction is Hydrolysis of terminal non-reducing beta-D-galactose residues in beta-D-galactosides.. This is Beta-galactosidase 2 from Oryza sativa subsp. japonica (Rice).